The chain runs to 194 residues: MSMYNYVKEAWKVPANSYVKELQWSRMQDWRKEPSVIRVERPTRIDRARNLGYKAKQGIVVVRVSVRRGGLRKPRPKHSKKPSTLGINKITMAKSIQRIAEERAAKKYPNLEVLNSYWVGQDGKQKWYEVILVDSCHPSIKSDKSYNWLCKGTHKGRATRGLTSAGKKGRGLMYKGKGAEKVRPSVRANSKKAK.

The disordered stretch occupies residues 160–194 (RGLTSAGKKGRGLMYKGKGAEKVRPSVRANSKKAK).

The protein belongs to the eukaryotic ribosomal protein eL15 family.

This is Large ribosomal subunit protein eL15 from Methanococcus maripaludis (strain C6 / ATCC BAA-1332).